The primary structure comprises 252 residues: Trans-aconitate 2-methyltransferase (252 aa).

It belongs to the methyltransferase superfamily. Tam family.

Its subcellular location is the cytoplasm. It catalyses the reaction trans-aconitate + S-adenosyl-L-methionine = (E)-3-(methoxycarbonyl)pent-2-enedioate + S-adenosyl-L-homocysteine. Its function is as follows. Catalyzes the S-adenosylmethionine monomethyl esterification of trans-aconitate. The sequence is that of Trans-aconitate 2-methyltransferase from Escherichia coli (strain SE11).